We begin with the raw amino-acid sequence, 468 residues long: BTB and MATH domain-containing protein 45 (468 aa).

An MATH domain is found at 7-124 (VFELSHVFKD…DDSIIIEVLV (118 aa)). BTB domains lie at 148–215 (SDGI…IDDD) and 304–368 (SDVI…IDDL).

The sequence is that of BTB and MATH domain-containing protein 45 (bath-45) from Caenorhabditis elegans.